The sequence spans 978 residues: MKLEHPDRLMNRTPLSLAALEVHDAFAERHIGPDAADQHAMLEALGFASRAALIDAVIPKTIRRTETLPLGPFTQPKSEAEALAALRELADKNQVFRSYIGQGYYNAHTPTVILRNVLENPAWYTAYTPYQPEISQGRLEALLNFQQMIVDLTGLAISNASLLDEATAAAEAMTLLQRVGKPKSNVFFVADDVLPQTIEVVRTRATPVGIEVKVGPASEAANANAFGVLLQYPGVNGDVRDYRALTEAIHAAGGHVVVAADLLALTVLTPPGEWGADVAVGNTQRFGVPVGFGGPHAAYLAVRDEFKRQMPGRLVGVTVDAQGNPALRLALQTREQHIRREKATSNVCTAQALLAIMASMYAVYHGPHGLKTIALRVNRIAALLAEGAKQLGYTLANETFFDTLTFDTGARTQALLDAATAKRINLRRVSATQVGLSIDETTTRHDLADLLAVFAQAAFTNDVPQVDALDAKLAASNTASVPAALERTSAYLTHHVFNRHHSETEMLRYLRSLSDKDLALDRSMIPLGSCTMKLNATSEMLPVTWPEFGQIHPFAPAEQTVGYREMIDQLEEMLVAATGYAAVSLQPNAGSQGEYAGLLIIHAYHASRGEAHRNVCLIPASAHGTNPASAQMAGMQVVVVACDAQGNVDIEDLKKKAGQHADKLAAIMITYPSTHGVFEQNVREICEIVHAHGGQVYVDGANMNAMVGLTAPGQFGGDVSHLNLHKTFCIPHGGGGPGVGPVAVGAHLAQFLPNQISSGYERAPNGIGAVSGAPYGSASILPISWMYIAMMGAKNLTAATETAILNANYVAKKLAPHYPVLYSGPGGLVAHECILDLRPIKETSGITVDDVAKRLADYGFHAPTMSFPVPGTLMVEPTESESKEELDRFIEAMIAIREEIRAVEDGRSDREDNPLKHAPHTAAVVIANDWKHAYARETAAYPLPTLIAKKYWPPVGRADNVYGDRNLFCSCVPIADYE.

Position 726 is an N6-(pyridoxal phosphate)lysine (Lys726).

Belongs to the GcvP family. In terms of assembly, the glycine cleavage system is composed of four proteins: P, T, L and H. Pyridoxal 5'-phosphate serves as cofactor.

The enzyme catalyses N(6)-[(R)-lipoyl]-L-lysyl-[glycine-cleavage complex H protein] + glycine + H(+) = N(6)-[(R)-S(8)-aminomethyldihydrolipoyl]-L-lysyl-[glycine-cleavage complex H protein] + CO2. In terms of biological role, the glycine cleavage system catalyzes the degradation of glycine. The P protein binds the alpha-amino group of glycine through its pyridoxal phosphate cofactor; CO(2) is released and the remaining methylamine moiety is then transferred to the lipoamide cofactor of the H protein. This Paraburkholderia phytofirmans (strain DSM 17436 / LMG 22146 / PsJN) (Burkholderia phytofirmans) protein is Glycine dehydrogenase (decarboxylating).